A 2896-amino-acid polypeptide reads, in one-letter code: Protein PRRC2C (2896 aa).

N6-acetyllysine is present on Lys27. Positions 28-212 (GKSLETQKTT…STAGTSEQND (185 aa)) are disordered. The span at 88–97 (QEQHEEEKTP) shows a compositional bias: basic and acidic residues. Low complexity predominate over residues 105–119 (KPGVAAPPEVAPAPK). A compositionally biased stretch (polar residues) spans 134-144 (QVNSQFQQEFP). A compositionally biased stretch (basic and acidic residues) spans 151–160 (DQEKKEKETN). Residues Ser187 and Ser191 each carry the phosphoserine modification. The span at 201-211 (DESTAGTSEQN) shows a compositional bias: polar residues. Arg242 carries the post-translational modification Asymmetric dimethylarginine; alternate. Position 242 is an omega-N-methylarginine; alternate (Arg242). Asymmetric dimethylarginine is present on residues Arg255 and Arg266. Disordered regions lie at residues 264 to 729 (PMRF…QHLA) and 750 to 788 (SGRP…SFEH). Omega-N-methylarginine is present on residues Arg279 and Arg281. The segment covering 301 to 310 (ELKELDKFDN) has biased composition (basic and acidic residues). Phosphoserine is present on Ser335. Polar residues predominate over residues 341 to 358 (GSNSPKENNSEDQGSKAS). The segment covering 359 to 368 (ENNENKKETD) has biased composition (basic and acidic residues). Positions 370–381 (VSNTKSSSQIPA) are enriched in polar residues. Lys392 bears the N6-acetyllysine mark. Residues Ser395 and Ser500 each carry the phosphoserine modification. A compositionally biased stretch (polar residues) spans 395-405 (SFNQERGTSSH). The segment covering 465–648 (RREEEERRME…EATPVVHETE (184 aa)) has biased composition (basic and acidic residues). Residues 676–708 (QRQQEQMKQQQWQQQQQQGVLPQTVPSQPSSST) show a composition bias toward low complexity. A compositionally biased stretch (pro residues) spans 759–769 (PIHPGMIPPKP). Phosphoserine is present on residues Ser779, Ser785, and Ser801. The tract at residues 804–1118 (RMLWGSDPYP…PVSTVQVEPA (315 aa)) is disordered. Basic and acidic residues-rich tracts occupy residues 825–836 (ATEEPEDVRSEA), 852–867 (NQLE…RESS), and 878–888 (SVEDVRPHHTD). Phosphoserine occurs at positions 867, 878, 920, and 929. 3 stretches are compositionally biased toward basic and acidic residues: residues 954–993 (IDSK…ETRW), 1000–1010 (NRREEVNDRPV), and 1020–1058 (VLRD…KKDL). Residues 1020–1046 (VLRDMKEEREQRKEKEGEKAEKVTEKV) adopt a coiled-coil conformation. Residues 1059–1081 (PPPPPPPQPPAPIQPQSVPPPIQ) are compositionally biased toward pro residues. A compositionally biased stretch (polar residues) spans 1089 to 1100 (STETATLAQKPS). Residue Lys1133 forms a Glycyl lysine isopeptide (Lys-Gly) (interchain with G-Cter in SUMO2) linkage. Composition is skewed to basic and acidic residues over residues 1143–1163 (SKDL…KKES), 1170–1180 (YWKEARERDWF), 1214–1230 (HTRD…RAEH), and 1237–1248 (RQREESETRSES). Disordered regions lie at residues 1143 to 1647 (SKDL…DALS), 1670 to 1785 (EDPQ…SAPV), 1905 to 1991 (APAS…TAEL), 2005 to 2164 (ISKK…VSEM), 2218 to 2238 (LPNT…SLTS), 2257 to 2290 (WENS…GPST), 2317 to 2341 (GAGT…NICK), and 2668 to 2701 (DIKP…QSSK). 5 positions are modified to phosphoserine: Ser1242, Ser1246, Ser1248, Ser1249, and Ser1263. Composition is skewed to basic and acidic residues over residues 1261 to 1297 (RGSE…ENKK), 1305 to 1330 (FKPD…DKAK), 1381 to 1418 (EVPK…PARE), and 1429 to 1446 (PRQD…REAA). Phosphothreonine is present on residues Thr1265 and Thr1267. Polar residues-rich tracts occupy residues 1457-1469 (TNGT…QEPV) and 1477-1491 (GNKT…SSDQ). Residues 1505–1517 (FNERRERDEKKNA) show a composition bias toward basic and acidic residues. Ser1544 is subject to Phosphoserine. Basic and acidic residues-rich tracts occupy residues 1620 to 1634 (NSKD…DPKP) and 1692 to 1704 (RLQD…KEEQ). Residues 1682–1717 (TEVVSKKQQKRLQDEERRKKEEQVIQVWNKKNANEK) adopt a coiled-coil conformation. Residues 1742–1785 (SSASVPPLASAPLPPSTSASVPASTSAPLPATLTPVPASTSAPV) show a composition bias toward low complexity. The segment covering 1913–1929 (APAPTPVSAPNPAPPAP) has biased composition (pro residues). The span at 1943 to 1952 (PLQTTSQSSK) shows a compositional bias: low complexity. Thr1965 carries the post-translational modification Phosphothreonine. Polar residues predominate over residues 1976–1986 (KSIQTPQSHGT). Phosphoserine occurs at positions 1983 and 2013. Residues 2019-2035 (SVSAWNKPLTSFGSAPS) are compositionally biased toward polar residues. Positions 2075 to 2088 (KSADKIPEPKEQRQ) are enriched in basic and acidic residues. Residue Ser2105 is modified to Phosphoserine. Residues 2108–2132 (ENKEHKPGPIGKERSLKNRKVKDAQ) show a composition bias toward basic and acidic residues. Ser2143 carries the post-translational modification Phosphoserine. Positions 2257 to 2267 (WENSPNVREKG) are enriched in basic and acidic residues. Ser2260 bears the Phosphoserine mark. Positions 2269-2290 (PVTSTAPPIATGVSSSASGPST) are enriched in polar residues. A compositionally biased stretch (low complexity) spans 2320-2334 (TYTTSSLSTKSTTTS). 2 positions are modified to phosphothreonine: Thr2673 and Thr2682. Residues 2679 to 2701 (RSTTPTSSPFRATSTSPNSQSSK) are compositionally biased toward polar residues. Phosphoserine is present on residues Ser2686 and Ser2694. The residue at position 2814 (Arg2814) is an Omega-N-methylarginine. Residue Arg2823 is modified to Asymmetric dimethylarginine; alternate. Arg2823 carries the post-translational modification Omega-N-methylarginine; alternate. Polar residues predominate over residues 2824–2833 (FFSEQQQSKQ). Residues 2824–2896 (FFSEQQQSKQ…QAIKTEETKS (73 aa)) form a disordered region.

As to expression, overexpressed in bladder cancer.

The protein resides in the cytoplasm. Its subcellular location is the stress granule. Its function is as follows. Required for efficient formation of stress granules. The protein is Protein PRRC2C of Homo sapiens (Human).